A 172-amino-acid chain; its full sequence is VQ motif-containing protein 17 (172 aa).

A VQ motif is present at residues 51–60; that stretch reads FREIVQNLTG. Residues 60–97 are disordered; the sequence is GKQDHHHHDLPHQKGLKRNPRSRRSHDHHEVHDMNKSH. The span at 61–71 shows a compositional bias: basic and acidic residues; sequence KQDHHHHDLPH. Over residues 72–85 the composition is skewed to basic residues; it reads QKGLKRNPRSRRSH. The segment covering 86 to 95 has biased composition (basic and acidic residues); it reads DHHEVHDMNK.

The protein localises to the nucleus. Functionally, may function as positive regulator of plant growth. The sequence is that of VQ motif-containing protein 17 from Arabidopsis thaliana (Mouse-ear cress).